Here is a 725-residue protein sequence, read N- to C-terminus: Ribonuclease Y (725 aa).

The helical transmembrane segment at 4–24 (VLVILLSLVLLVLVALILAVA) threads the bilayer. 3 disordered regions span residues 62–140 (DGPA…ASDT), 165–195 (VAATEDTSLEAPLRESALRESAPGESASVRR), and 300–321 (EQRVEERTAGLDEHASRLAGRE). Composition is skewed to low complexity over residues 84–100 (DAPGAAYGESAAAPDAG) and 114–137 (AAAPEPGAAIGGAPTPAAGSPADA). Positions 415-481 (VVTVLHLPGD…RITLAALVSD (67 aa)) constitute a KH domain. The HD domain occupies 541–634 (VLAHLIESAH…TQAADQISGG (94 aa)).

It belongs to the RNase Y family.

It localises to the cell membrane. In terms of biological role, endoribonuclease that initiates mRNA decay. This chain is Ribonuclease Y, found in Frankia alni (strain DSM 45986 / CECT 9034 / ACN14a).